Consider the following 83-residue polypeptide: Antitoxin ChpS (83 aa).

The region spanning 3–48 is the SpoVT-AbrB domain; sequence ITIKRWGNSAGMVIPNIVMKELNLQPGQSVEAQVSNNQLILTPISR.

Belongs to the PemI family. Interacts with ChpB, inhibiting its endoribonuclease activity.

Functionally, antitoxin component of a type II toxin-antitoxin (TA) system. May be involved in the regulation of cell growth. It acts as a suppressor of the endoribonuclease (inhibitory function) of ChpB protein. Both ChpS and ChpB probably bind to the promoter region of the chpS-chpB operon to autoregulate their synthesis. The protein is Antitoxin ChpS (chpS) of Escherichia coli (strain K12).